The following is a 111-amino-acid chain: Wound-induced proteinase inhibitor 1 (111 aa).

The signal sequence occupies residues M1 to A23. Residues R24 to L36 constitute a propeptide that is removed on maturation.

This sequence belongs to the protease inhibitor I13 (potato type I serine protease inhibitor) family.

It is found in the secreted. This chain is Wound-induced proteinase inhibitor 1 (PIIF), found in Solanum lycopersicum (Tomato).